Here is a 1137-residue protein sequence, read N- to C-terminus: 2'-5'-oligoadenylate synthase 3 (1137 aa).

N-acetylmethionine is present on Met1. The tract at residues 6–341 is OAS domain 1; the sequence is TPAGALDKLV…GALVQPWEGP (336 aa). Interaction with dsRNA stretches follow at residues 12–56 and 185–199; these read DKLV…VIRI and ELRKNFVNIRPVKLK. Positions 342-461 are linker; the sequence is GLPCAGILDL…GSQMGPDLSQ (120 aa). Polar residues predominate over residues 434 to 453; it reads QSTASSNTPPGHSSMSTAGS. The disordered stretch occupies residues 434–462; sequence QSTASSNTPPGHSSMSTAGSQMGPDLSQI. OAS domain stretches follow at residues 462–792 and 800–1134; these read IPSK…PWDV and TPAQ…WPVK. Ser854 serves as a coordination point for ATP. Mg(2+) contacts are provided by Asp866, Asp868, and Asp938. ATP-binding residues include Arg997, Lys1000, and Gln1019.

It belongs to the 2-5A synthase family. As to quaternary structure, monomer. The cofactor is Mg(2+).

The protein localises to the cytoplasm. It is found in the nucleus. The enzyme catalyses 3 ATP = 5'-triphosphoadenylyl-(2'-&gt;5')-adenylyl-(2'-&gt;5')-adenosine + 2 diphosphate. Produced as a latent enzyme which is activated by dsRNA generated during the course of viral infection. Strongly activated by long dsRNAs at least 50 nucleotides in length. ssRNA does not activate the enzyme. In terms of biological role, interferon-induced, dsRNA-activated antiviral enzyme which plays a critical role in cellular innate antiviral response. In addition, it may also play a role in other cellular processes such as apoptosis, cell growth, differentiation and gene regulation. Synthesizes preferentially dimers of 2'-5'-oligoadenylates (2-5A) from ATP which then bind to the inactive monomeric form of ribonuclease L (RNase L) leading to its dimerization and subsequent activation. Activation of RNase L leads to degradation of cellular as well as viral RNA, resulting in the inhibition of protein synthesis, thus terminating viral replication. Can mediate the antiviral effect via the classical RNase L-dependent pathway or an alternative antiviral pathway independent of RNase L. The chain is 2'-5'-oligoadenylate synthase 3 (Oas3) from Rattus norvegicus (Rat).